The primary structure comprises 1056 residues: ISWI chromatin-remodeling complex ATPase CHR11 (1056 aa).

Low complexity predominate over residues 1 to 10 (MARNSNSDEA). 2 disordered regions span residues 1–80 (MARN…SKRE) and 133–175 (KSDG…GSGN). Acidic residues-rich tracts occupy residues 11 to 32 (FSSE…EELE) and 60 to 73 (PVED…DEEK). Residues 12 to 105 (SSEEEEERVK…QEMLESQNAS (94 aa)) adopt a coiled-coil conformation. Positions 141 to 151 (KKAKGRGRHAS) are enriched in basic residues. A compositionally biased stretch (acidic residues) spans 155–169 (EEEEDEEYLKEEEDG). One can recognise a Helicase ATP-binding domain in the interval 201 to 366 (IRLYENGING…WALLNFLLPE (166 aa)). 214-221 (DEMGLGKT) lines the ATP pocket. Residues 317 to 320 (DEAH) carry the DEAH box motif. A Helicase C-terminal domain is found at 494-645 (LLDKLLPKLK…ALVIQQGRLA (152 aa)). 2 disordered regions span residues 738–774 (WNDP…PRIP) and 814–833 (IDVE…EVEE). Residues 815 to 833 (DVEEPEEGGDPLTTEEVEE) show a composition bias toward acidic residues. SANT domains lie at 840 to 892 (EGFS…ERYK) and 941 to 1002 (QNKG…DTLI). The disordered stretch occupies residues 1011 to 1056 (EFDERERQARKEKKLAKSATPSKRPLGRQASESPSSTKKRKHLSMR). Basic residues predominate over residues 1047 to 1056 (TKKRKHLSMR).

This sequence belongs to the SNF2/RAD54 helicase family. ISWI subfamily. Interacts with RLT1 and RLT2. Interacts (via C-terminus) with RLT1 (via the DDT domain), RLT2 (via the DDT domain), PTM (via the DDT domain) and DDR4 (via the DDT domain). Binds to FGT1. In terms of tissue distribution, highly expressed in growing tissues such as inflorescence and flower meristems, young leaves and floral organs. Expressed in roots, rosette and cauline leaves, stems, flowers, inflorescences and siliques.

The protein resides in the nucleus. Functionally, possesses intrinsic ATP-dependent nucleosome-remodeling activity. Constitutes the catalytic subunit of several complexes capable of forming ordered nucleosome arrays on chromatin. Involved in the formation of nucleosome distribution patterns. Involved in nuclear proliferation during megagametogenesis and cell expansion in the sporophyte. Required for the maintenance of the plant vegetative phase. In association with RLT1 or RLT2 may prevent the early activation of the vegetative-to-reproductive transition by regulating key genes that contribute to flower timing, such as FT, SEP1, SEP3, AGL8/FUL, SOC1 and FLC. Necessary to acquire heat stress (HS) memory. In Arabidopsis thaliana (Mouse-ear cress), this protein is ISWI chromatin-remodeling complex ATPase CHR11.